Reading from the N-terminus, the 852-residue chain is Protein SBE22 (852 aa).

Residues 1-158 form a disordered region; the sequence is MTSIQERGTS…ADKSKINTFP (158 aa). The segment covering 15–26 has biased composition (basic and acidic residues); sequence SLKEGEASDRSS. Positions 43-61 are enriched in polar residues; sequence PPSQTTLGRSRAGSNTMNK. Phosphoserine is present on S72. A compositionally biased stretch (polar residues) spans 74–96; sequence NLLSNMNCSDNGNGGNMLNSFVN. A compositionally biased stretch (low complexity) spans 124–139; that stretch reads TTEVFSSTSASSSLGD. S201 is subject to Phosphoserine. The tract at residues 206 to 248 is disordered; it reads AAEKTMNKSRHSYQEQFSSKKSQSSLLNSKQRSRAKSQTCSST. Low complexity predominate over residues 224–235; the sequence is SKKSQSSLLNSK. Residues S459, S517, and S520 each carry the phosphoserine modification.

The protein belongs to the SBE2 family.

The protein localises to the cytoplasm. Its subcellular location is the golgi apparatus. Its function is as follows. With SBE2, is involved in cell wall integrity and polarity processes like bud growth, through the transport of CHS3 and UTR2 to sites of growth. This Saccharomyces cerevisiae (strain YJM789) (Baker's yeast) protein is Protein SBE22 (SBE22).